The sequence spans 65 residues: Large ribosomal subunit protein bL35 (65 aa).

Belongs to the bacterial ribosomal protein bL35 family.

This is Large ribosomal subunit protein bL35 from Paraburkholderia phytofirmans (strain DSM 17436 / LMG 22146 / PsJN) (Burkholderia phytofirmans).